We begin with the raw amino-acid sequence, 1044 residues long: Probable pre-mRNA-splicing factor ATP-dependent RNA helicase DEAH6 (1044 aa).

2 disordered regions span residues 99–134 (EADHDEDENNVKKQSASKTGKSDKGQKRFRKKSEQL) and 152–211 (RRKV…VRRD). The segment covering 157 to 167 (EDEDDGTESEE) has biased composition (acidic residues). Basic and acidic residues predominate over residues 168–211 (ERLRDQREREELEQHLRERDTARTRKLTEPKMSKKEQEEFVRRD). One can recognise a Helicase ATP-binding domain in the interval 414–577 (LNAVKDHQVL…FDQAPIFRFP (164 aa)). Residue 427-434 (GETGSGKT) coordinates ATP. The short motif at 524–527 (DEAH) is the DEAH box element. One can recognise a Helicase C-terminal domain in the interval 599 to 775 (AITTVLTIHV…SVVLSLKSLG (177 aa)).

This sequence belongs to the DEAD box helicase family. DEAH subfamily. PRP2 sub-subfamily. As to expression, predominantly expressed in flowers.

It catalyses the reaction ATP + H2O = ADP + phosphate + H(+). Its function is as follows. May be involved in pre-mRNA splicing. This is Probable pre-mRNA-splicing factor ATP-dependent RNA helicase DEAH6 from Arabidopsis thaliana (Mouse-ear cress).